Here is a 404-residue protein sequence, read N- to C-terminus: Cysteine--tRNA ligase (404 aa).

A Zn(2+)-binding site is contributed by cysteine 14. A 'HIGH' region motif is present at residues 16-26; the sequence is PTVYSDVHIGN. Positions 190, 216, and 220 each coordinate Zn(2+). Residues 248 to 252 carry the 'KMSKS' region motif; it reads KMAKS. Lysine 251 is an ATP binding site.

The protein belongs to the class-I aminoacyl-tRNA synthetase family. As to quaternary structure, monomer. The cofactor is Zn(2+).

The protein localises to the cytoplasm. The enzyme catalyses tRNA(Cys) + L-cysteine + ATP = L-cysteinyl-tRNA(Cys) + AMP + diphosphate. The protein is Cysteine--tRNA ligase of Mesomycoplasma hyopneumoniae (strain 232) (Mycoplasma hyopneumoniae).